The sequence spans 476 residues: Protein transport protein Sec61 subunit alpha-like 2 (476 aa).

Residues 2–33 (AIKFLEVIKPFCAVLPEIQKPERRIQFKEKVL) lie on the Cytoplasmic side of the membrane. A helical membrane pass occupies residues 34–53 (WTAITLFIFLVCCQIPLFGI). Over 54–76 (MSSDSADPFYWMRVIMASNRGTL) the chain is Lumenal. Residues 77-96 (MELGISPIVTSGLIMQLLAG) form a helical membrane-spanning segment. Residues 97-117 (AKIIEVGDTPKDRALFNGAQK) are Cytoplasmic-facing. The chain crosses the membrane as a helical span at residues 118 to 138 (LFGMIITIGQAVVYVMTGMYG). The Lumenal segment spans residues 139 to 144 (DPSEMG). A helical membrane pass occupies residues 145–165 (AGICLLIIIQLFVAGLIVLLL). The Cytoplasmic segment spans residues 166–172 (DELLQKG). The chain crosses the membrane as a helical span at residues 173-193 (YGLGSGISLFIATNICETIVW). Residues 194 to 240 (KAFSPTTVNTGRGTEFEGAIIALFHLLATRTDKVRALREAFYRQNLP) are Lumenal-facing. A helical membrane pass occupies residues 241-261 (NLMNLIATIFVFAVVIYFQGF). The Cytoplasmic portion of the chain corresponds to 262–288 (RVDLPIKSARYRGQYNTYPIKLFYTSN). The helical transmembrane segment at 289–309 (IPIILQSALVSNLYVISQMLS) threads the bilayer. Over 310–354 (TRFSGNFLVNLLGTWSDTSTGGPARAYPVGGLCYYLSPPESFGTV) the chain is Lumenal. The helical transmembrane segment at 355–375 (LEDPIHAIIYIIFMLGSCAFF) threads the bilayer. Residues 376–420 (SKTWIEVSGSSAKDVAKQLKEQQMVMRGHRETSMVHELNRYIPTA) lie on the Cytoplasmic side of the membrane. Residues 421–441 (AAFGGLCIGGLSVMADFLGAI) traverse the membrane as a helical segment. Residues 442 to 445 (GSGT) are Lumenal-facing. Residues 446 to 462 (GILLAVTIIYQYFEIFV) traverse the membrane as a helical segment. The Cytoplasmic portion of the chain corresponds to 463-476 (KEQSEVGSVGALLF).

The protein belongs to the SecY/SEC61-alpha family. The SEC61 channel-forming translocon complex consists of channel-forming core components SEC61A1, SEC61B and SEC61G and different auxiliary components such as SEC62 and SEC63.

It localises to the endoplasmic reticulum membrane. Component of SEC61 channel-forming translocon complex that mediates transport of signal peptide-containing precursor polypeptides across the endoplasmic reticulum (ER). Forms a ribosome receptor and a gated pore in the ER membrane, both functions required for cotranslational translocation of nascent polypeptides. This is Protein transport protein Sec61 subunit alpha-like 2 (sec61al2) from Danio rerio (Zebrafish).